A 318-amino-acid polypeptide reads, in one-letter code: MIKKRNTTKISVIGAGSVGATTAYALMLSGVATEIVLVDVNKSKTEGEAMDLSHGADFVKPVNILSGDYKDTEGSDIVVITAGAAQKVGETRLQLINKNINIFKSIIPEVVKYNKDAILLVVSNPVDVLSYVTYKLSGFPKERVIGSGTVLDTSRLKHEIGKRYKIDPRNVNTYIMGEHGDSEIATWSVTNIQNIKIDEYANKENLEYNDNFRKEVYENVKNAAYEVINRKGATFYAIALAVTRIVKAILGDEKTILPVSTLVENYYGIKDVYLGMPCIVGGSGIEKALSIDLNKTEASKLVKSAETLKNTLNNASCL.

Residues valine 18, aspartate 39, lysine 44, tyrosine 69, and 83–84 (GA) each bind NAD(+). Substrate is bound by residues glutamine 86 and arginine 92. NAD(+) is bound by residues serine 105, 122–124 (VSN), and serine 147. 124–127 (NPVD) provides a ligand contact to substrate. 152-155 (DTSR) contacts substrate. The active-site Proton acceptor is histidine 179. Tyrosine 225 is modified (phosphotyrosine). Threonine 234 is a substrate binding site.

Belongs to the LDH/MDH superfamily. LDH family. As to quaternary structure, homotetramer.

The protein localises to the cytoplasm. It catalyses the reaction (S)-lactate + NAD(+) = pyruvate + NADH + H(+). Its pathway is fermentation; pyruvate fermentation to lactate; (S)-lactate from pyruvate: step 1/1. Catalyzes the conversion of lactate to pyruvate. This chain is L-lactate dehydrogenase, found in Clostridium botulinum (strain Kyoto / Type A2).